A 705-amino-acid polypeptide reads, in one-letter code: Translation initiation factor IF-2 (705 aa).

Residues 40-124 are disordered; that stretch reads DDQIKALDKK…QPAAPKEIPS (85 aa). Basic and acidic residues predominate over residues 41-58; sequence DQIKALDKKFKKEQKNDN. A compositionally biased stretch (low complexity) spans 59–77; it reads KQSTQNNHQKSNNQNQNKG. Residues 94–108 show a composition bias toward basic residues; that stretch reads KGNKKNNRNNKKNNK. One can recognise a tr-type G domain in the interval 207–376; sequence ERPAVVTIMG…GLVAEVQELK (170 aa). The G1 stretch occupies residues 216-223; the sequence is GHVDHGKT. GTP is bound at residue 216–223; the sequence is GHVDHGKT. The segment at 241-245 is G2; that stretch reads GITQH. Residues 262–265 form a G3 region; that stretch reads DTPG. GTP-binding positions include 262–266 and 316–319; these read DTPGH and NKID. Residues 316–319 form a G4 region; the sequence is NKID. Residues 352–354 form a G5 region; that stretch reads SAL.

Belongs to the TRAFAC class translation factor GTPase superfamily. Classic translation factor GTPase family. IF-2 subfamily.

Its subcellular location is the cytoplasm. One of the essential components for the initiation of protein synthesis. Protects formylmethionyl-tRNA from spontaneous hydrolysis and promotes its binding to the 30S ribosomal subunits. Also involved in the hydrolysis of GTP during the formation of the 70S ribosomal complex. This chain is Translation initiation factor IF-2, found in Staphylococcus aureus (strain Mu3 / ATCC 700698).